The following is a 434-amino-acid chain: Enolase (434 aa).

Histidine 158 and glutamate 167 together coordinate substrate. The active-site Proton donor is the glutamate 210. Residues aspartate 245, glutamate 294, and aspartate 319 each contribute to the Mg(2+) site. Glutamate 294 and aspartate 319 together coordinate substrate. Lysine 344 serves as the catalytic Proton acceptor. Residues 371 to 374 and lysine 395 contribute to the substrate site; that span reads SHRS.

Belongs to the enolase family. In terms of assembly, homodimer. It depends on Mg(2+) as a cofactor.

It is found in the cytoplasm. The catalysed reaction is (2R)-2-phosphoglycerate = phosphoenolpyruvate + H2O. It participates in carbohydrate degradation; glycolysis; pyruvate from D-glyceraldehyde 3-phosphate: step 4/5. This Doryteuthis pealeii (Longfin inshore squid) protein is Enolase.